Here is a 328-residue protein sequence, read N- to C-terminus: Formimidoylglutamase (328 aa).

Residues H133, D159, H161, D163, D253, and D255 each contribute to the Mn(2+) site.

The protein belongs to the arginase family. Mn(2+) serves as cofactor.

The catalysed reaction is N-formimidoyl-L-glutamate + H2O = formamide + L-glutamate. It functions in the pathway amino-acid degradation; L-histidine degradation into L-glutamate; L-glutamate from N-formimidoyl-L-glutamate (hydrolase route): step 1/1. Catalyzes the conversion of N-formimidoyl-L-glutamate to L-glutamate and formamide. This is Formimidoylglutamase from Streptococcus pyogenes serotype M6 (strain ATCC BAA-946 / MGAS10394).